Here is a 115-residue protein sequence, read N- to C-terminus: U3-lycotoxin-Ls1k (115 aa).

Positions 1 to 20 (MKFVLLFGVLLVTLFSYSSA) are cleaved as a signal peptide. A propeptide spanning residues 21–44 (EMLDDFDQADEDELLSLIEKEEAR) is cleaved from the precursor. Intrachain disulfides connect Cys-48–Cys-63, Cys-55–Cys-72, Cys-62–Cys-87, and Cys-74–Cys-85.

The protein belongs to the neurotoxin 19 (CSTX) family. 01 subfamily. As to expression, expressed by the venom gland.

It is found in the secreted. This Lycosa singoriensis (Wolf spider) protein is U3-lycotoxin-Ls1k.